Here is a 456-residue protein sequence, read N- to C-terminus: 3-isopropylmalate dehydratase large subunit (456 aa).

C336, C396, and C399 together coordinate [4Fe-4S] cluster.

This sequence belongs to the aconitase/IPM isomerase family. LeuC type 1 subfamily. As to quaternary structure, heterodimer of LeuC and LeuD. The cofactor is [4Fe-4S] cluster.

The enzyme catalyses (2R,3S)-3-isopropylmalate = (2S)-2-isopropylmalate. Its pathway is amino-acid biosynthesis; L-leucine biosynthesis; L-leucine from 3-methyl-2-oxobutanoate: step 2/4. Functionally, catalyzes the isomerization between 2-isopropylmalate and 3-isopropylmalate, via the formation of 2-isopropylmaleate. The polypeptide is 3-isopropylmalate dehydratase large subunit (Staphylococcus aureus (strain JH1)).